The following is a 161-amino-acid chain: Protein-export protein SecB (161 aa).

It belongs to the SecB family. As to quaternary structure, homotetramer, a dimer of dimers. One homotetramer interacts with 1 SecA dimer.

The protein localises to the cytoplasm. Functionally, one of the proteins required for the normal export of preproteins out of the cell cytoplasm. It is a molecular chaperone that binds to a subset of precursor proteins, maintaining them in a translocation-competent state. It also specifically binds to its receptor SecA. The polypeptide is Protein-export protein SecB (Shewanella putrefaciens (strain CN-32 / ATCC BAA-453)).